A 215-amino-acid chain; its full sequence is N-(5'-phosphoribosyl)anthranilate isomerase (215 aa).

This sequence belongs to the TrpF family.

It catalyses the reaction N-(5-phospho-beta-D-ribosyl)anthranilate = 1-(2-carboxyphenylamino)-1-deoxy-D-ribulose 5-phosphate. The protein operates within amino-acid biosynthesis; L-tryptophan biosynthesis; L-tryptophan from chorismate: step 3/5. The chain is N-(5'-phosphoribosyl)anthranilate isomerase from Rhizobium meliloti (strain 1021) (Ensifer meliloti).